A 380-amino-acid chain; its full sequence is Cobalt-precorrin-5B C(1)-methyltransferase (380 aa).

Belongs to the CbiD family.

It carries out the reaction Co-precorrin-5B + S-adenosyl-L-methionine = Co-precorrin-6A + S-adenosyl-L-homocysteine. It functions in the pathway cofactor biosynthesis; adenosylcobalamin biosynthesis; cob(II)yrinate a,c-diamide from sirohydrochlorin (anaerobic route): step 6/10. Its function is as follows. Catalyzes the methylation of C-1 in cobalt-precorrin-5B to form cobalt-precorrin-6A. The chain is Cobalt-precorrin-5B C(1)-methyltransferase from Methanosphaera stadtmanae (strain ATCC 43021 / DSM 3091 / JCM 11832 / MCB-3).